Here is a 79-residue protein sequence, read N- to C-terminus: CDC42 small effector protein 1 (79 aa).

Residues Cys-10 and Cys-11 are each lipidated (S-palmitoyl cysteine). The region spanning 30–43 is the CRIB domain; it reads IGEPMNFVHLTHIG. A disordered region spans residues 48-79; that stretch reads GAGDGLAMTGAVQEQMRSKGNRDRPWSNSRGL. The span at 63–72 shows a compositional bias: basic and acidic residues; it reads MRSKGNRDRP.

The protein belongs to the CDC42SE/SPEC family. In terms of assembly, interacts with CDC42 (in GTP-bound form). Interacts weakly with RAC1 and not at all with RHOA.

The protein resides in the cytoplasm. The protein localises to the cytoskeleton. Its subcellular location is the cell membrane. In terms of biological role, probably involved in the organization of the actin cytoskeleton by acting downstream of CDC42, inducing actin filament assembly. Alters CDC42-induced cell shape changes. In activated T-cells, may play a role in CDC42-mediated F-actin accumulation at the immunological synapse. May play a role in early contractile events in phagocytosis in macrophages. This chain is CDC42 small effector protein 1 (CDC42SE1), found in Pongo abelii (Sumatran orangutan).